A 395-amino-acid polypeptide reads, in one-letter code: Acetate kinase 1 (395 aa).

Residue N8 participates in Mg(2+) binding. Position 15 (K15) interacts with ATP. R89 lines the substrate pocket. D146 acts as the Proton donor/acceptor in catalysis. Residues 206 to 210 (HIGNG), 283 to 285 (DMR), and 330 to 334 (GIGEN) contribute to the ATP site. E382 contacts Mg(2+).

It belongs to the acetokinase family. Homodimer. Mg(2+) is required as a cofactor. Requires Mn(2+) as cofactor.

It is found in the cytoplasm. The catalysed reaction is acetate + ATP = acetyl phosphate + ADP. It functions in the pathway metabolic intermediate biosynthesis; acetyl-CoA biosynthesis; acetyl-CoA from acetate: step 1/2. Its function is as follows. Catalyzes the formation of acetyl phosphate from acetate and ATP. Can also catalyze the reverse reaction. This chain is Acetate kinase 1, found in Lactococcus lactis subsp. lactis (strain IL1403) (Streptococcus lactis).